Here is a 399-residue protein sequence, read N- to C-terminus: Dual-specificity RNA methyltransferase RlmN (399 aa).

Glu122 serves as the catalytic Proton acceptor. The Radical SAM core domain maps to 128 to 371 (ETDRGTLCVS…VRTPRGRDIL (244 aa)). A disulfide bridge connects residues Cys135 and Cys374. [4Fe-4S] cluster is bound by residues Cys142, Cys146, and Cys149. S-adenosyl-L-methionine contacts are provided by residues 200 to 201 (GE), Ser232, 254 to 256 (SLH), and Asn331. The active-site S-methylcysteine intermediate is the Cys374.

It belongs to the radical SAM superfamily. RlmN family. It depends on [4Fe-4S] cluster as a cofactor.

Its subcellular location is the cytoplasm. It catalyses the reaction adenosine(2503) in 23S rRNA + 2 reduced [2Fe-2S]-[ferredoxin] + 2 S-adenosyl-L-methionine = 2-methyladenosine(2503) in 23S rRNA + 5'-deoxyadenosine + L-methionine + 2 oxidized [2Fe-2S]-[ferredoxin] + S-adenosyl-L-homocysteine. It carries out the reaction adenosine(37) in tRNA + 2 reduced [2Fe-2S]-[ferredoxin] + 2 S-adenosyl-L-methionine = 2-methyladenosine(37) in tRNA + 5'-deoxyadenosine + L-methionine + 2 oxidized [2Fe-2S]-[ferredoxin] + S-adenosyl-L-homocysteine. Its function is as follows. Specifically methylates position 2 of adenine 2503 in 23S rRNA and position 2 of adenine 37 in tRNAs. m2A2503 modification seems to play a crucial role in the proofreading step occurring at the peptidyl transferase center and thus would serve to optimize ribosomal fidelity. The sequence is that of Dual-specificity RNA methyltransferase RlmN from Rhodopseudomonas palustris (strain ATCC BAA-98 / CGA009).